Consider the following 251-residue polypeptide: MRRPMVAGNWKMHGTRASVAELTEGLSNLALPSGVEVAVFPPALFINQVIDGLAGKEITVGAQNSAVQPEQGALTGEVAPEQLVEAGCKLVLIGHSERRQVIGETDEVLNRKFAAAQAKGLKPVLCIGETLEEREAGKTLEVVGRQLSSIIEAFGVKAFANAVIAYEPVWAIGTGLTATPQQAQDVHAAIRGQLAAEDAEVAAKVQLLYGGSVKAANAAELFGMPDIDGGLIGGASLNADEFGAICRAAGN.

9–11 is a substrate binding site; that stretch reads NWK. His-95 serves as the catalytic Electrophile. Glu-167 acts as the Proton acceptor in catalysis. Substrate-binding positions include Gly-173, Ser-212, and 233–234; that span reads GG.

The protein belongs to the triosephosphate isomerase family. In terms of assembly, homodimer.

It localises to the cytoplasm. The enzyme catalyses D-glyceraldehyde 3-phosphate = dihydroxyacetone phosphate. Its pathway is carbohydrate biosynthesis; gluconeogenesis. It functions in the pathway carbohydrate degradation; glycolysis; D-glyceraldehyde 3-phosphate from glycerone phosphate: step 1/1. Functionally, involved in the gluconeogenesis. Catalyzes stereospecifically the conversion of dihydroxyacetone phosphate (DHAP) to D-glyceraldehyde-3-phosphate (G3P). The chain is Triosephosphate isomerase from Pseudomonas putida (strain GB-1).